We begin with the raw amino-acid sequence, 280 residues long: 3-dehydroshikimate dehydratase (280 aa).

3 residues coordinate substrate: Tyr-70, Arg-102, and Glu-142. Glu-142 contributes to the Mn(2+) binding site. The active-site Proton acceptor is the His-144. Asp-172 and His-175 together coordinate substrate. Mn(2+) is bound at residue Asp-172. His-198 lines the Mn(2+) pocket. Substrate is bound by residues Tyr-217 and Glu-253. Mn(2+) is bound at residue Glu-253.

Homodimer. It depends on Mn(2+) as a cofactor.

It carries out the reaction 3-dehydroshikimate = 3,4-dihydroxybenzoate + H2O. The protein operates within aromatic compound metabolism; 3,4-dihydroxybenzoate biosynthesis; 3,4-dihydroxybenzoate from 3-dehydroquinate: step 2/2. It participates in siderophore biosynthesis; petrobactin biosynthesis. Functionally, involved in the biosynthesis of petrobactin, a catecholate siderophore that functions in both iron acquisition and virulence. Catalyzes the conversion of 3-dehydroshikimate to 3,4-dihydroxybenzoate (3,4-DHBA). In Bacillus anthracis, this protein is 3-dehydroshikimate dehydratase.